We begin with the raw amino-acid sequence, 148 residues long: Large ribosomal subunit protein bL9 (148 aa).

Belongs to the bacterial ribosomal protein bL9 family.

In terms of biological role, binds to the 23S rRNA. The sequence is that of Large ribosomal subunit protein bL9 from Ectopseudomonas mendocina (strain ymp) (Pseudomonas mendocina).